We begin with the raw amino-acid sequence, 1590 residues long: MGSTTFENPTRIEILGKEDIIVDFDIWRNFVAEDLLSDLPSSTYVLITDTNLSPLYVPAFQQSFEALAAKSSSTPRLLTYEIPPGENSKSRETKAEIEDWMLSHQCTRDSVIIALGGGVIGDMIGYVAATFMRGVRFVQVPTTLLAMVDSSIGGKTAIDTPLGKNLVGAFWQPQRIYIDLRFLETLPVREFINGMAEVVKTAAIWDEAEFSALEDNANLIMTTIRAKNTDCSTRLGPIRDILKRIVLGSAKTKADVVSADEREGGLRNILNFGHSIGHAFEAILTPQVLHGEAVAIGMVKEAELARHLGVLKPGAVARLVKCIASYGLPTSLADKRIQKLTAGKLCPVDVLLEKMGVDKKNDGRKKKIVLLSAIGKTYEPKASVVEDRSIRVVLSDSVEVRPSVPETLNVEVTPPGSKSISNRALVLAALGTGPCRIKNLLHSDDVEFMLTSIGKLGGATYAWEDAGEVLCVQGKGGDLHASPTELYIGNAGTASRFLTTVVSLCKPSASTKSTILTGNARMKVRPIGPLVDSLRANGVDIEYLEKEHSLPLNVAASGGFTGGDINLAATVSSQYVSSLLMCAPYAKNPVTLRLVGGKPISQLYIDMTTAMMAAFGIHVVRSQTGEHTYHIPQGVYKNPEEYVVESDASSATYPLAVAATSGTTCTIPNIGCKSIQGDARFAIDVLKPTGCKVVQTDYSTTVTGPPIGSLQAIEEVDMEPMTDAFLTASVLGAVAKGTTKIRGIANQRVKECNRIKAMKDELAKFGVTCRELEDGIEVDGVPIKDLKHPAEGIHCYDDHRVAMSFSVLSVAASQPVLIEERECVGKTWPGWWDILSKSFQVELAGKEVKATHSKKIGIPTLPDKSIFIIGMRGAGKTTAGAWAAKILGRPYKDLDVELERISGMSIPDMVRSKGWDFFRAAELDLLKHCLTDQPEKHVFACGGGVVEMPEARELLINFHKSGGIVLLVHRDTEQVMDYLRIDKTRPAYVEDMMGVYSRRKPWFNECSNFQYHSKGSGASALSVAEQDFARFLHHISGKSLHFDEMRNKPQSFFVSLTMPDISGAAYILPSVAVGSDAVEVRVDLLEDPSSTNGIPGTDFLSVQIAHLRSVVHLPVIFTVRTVSQGGRFPDAAHEEALKLYKLAVKMGIEYIDLEIAFPDELLQEVTEAKGFSRIIASHHDPQGTLSWKNGGWFQHYNRALQYGDIIKLVGSAKSIEDNFALAKFKKTMAAAHDTPLIAINMGVTGKLSRVLNGFMTPVSHPSLPFKAAPGQLSAAEIRSTLSTLGEIEPKSFYLFGTPISQSRSPALHNTLFKQTGLPHRYSRLETDRVADVQDVIRAPDFGGASVTIPLKLDIIPLLDSVTDAVKVIGAVNTIIPTPDNPPRLVGENTDWLGMTHSLMSASHTPSPVDSPSPALVIGAGGTARAAIYALHSLGHSPIYMVARTPSKLDTLINSFPSSFNIIPLPSTTSATELTTPPAVAISTIPADRPIESNMRETLAVLLRHEKKDEGKQRTLLEMAYKPSQTPLMRMAEDAGWVAIPGLEVLSAQGWYQVSLFPFHLLVCYEVIFLNGFTKIYRLVSKMDKHPTFVC.

Positions 1–387 (MGSTTFENPT…YEPKASVVED (387 aa)) are 3-dehydroquinate synthase. NAD(+)-binding positions include 49–51 (DTN), 86–89 (ENSK), 117–119 (GGV), and Asp122. Position 133 (Arg133) interacts with 7-phospho-2-dehydro-3-deoxy-D-arabino-heptonate. 142–143 (TT) is an NAD(+) binding site. 7-phospho-2-dehydro-3-deoxy-D-arabino-heptonate-binding residues include Asp149 and Lys155. Lys164 provides a ligand contact to NAD(+). Asn165 lines the 7-phospho-2-dehydro-3-deoxy-D-arabino-heptonate pocket. NAD(+)-binding positions include 182 to 185 (FLET) and Asn193. Glu197 is a Zn(2+) binding site. 7-phospho-2-dehydro-3-deoxy-D-arabino-heptonate-binding positions include 197–200 (EVVK) and Lys253. Glu263 (proton acceptor; for 3-dehydroquinate synthase activity) is an active-site residue. 7-phospho-2-dehydro-3-deoxy-D-arabino-heptonate contacts are provided by residues 267–271 (RNILN) and His274. Zn(2+) is bound at residue His274. His278 (proton acceptor; for 3-dehydroquinate synthase activity) is an active-site residue. Positions 290 and 359 each coordinate 7-phospho-2-dehydro-3-deoxy-D-arabino-heptonate. Residue His290 participates in Zn(2+) binding. The EPSP synthase stretch occupies residues 400–841 (VRPSVPETLN…WDILSKSFQV (442 aa)). Residue Cys823 is the For EPSP synthase activity of the active site. Positions 863 to 1055 (DKSIFIIGMR…RNKPQSFFVS (193 aa)) are shikimate kinase. Position 870-877 (870-877 (GMRGAGKT)) interacts with ATP. The interval 1056–1276 (LTMPDISGAA…AAPGQLSAAE (221 aa)) is 3-dehydroquinase. His1179 functions as the Proton acceptor; for 3-dehydroquinate dehydratase activity in the catalytic mechanism. The Schiff-base intermediate with substrate; for 3-dehydroquinate dehydratase activity role is filled by Lys1207. The segment at 1289 to 1590 (PKSFYLFGTP…KMDKHPTFVC (302 aa)) is shikimate dehydrogenase.

The protein in the N-terminal section; belongs to the sugar phosphate cyclases superfamily. Dehydroquinate synthase family. In the 2nd section; belongs to the EPSP synthase family. It in the 3rd section; belongs to the shikimate kinase family. This sequence in the 4th section; belongs to the type-I 3-dehydroquinase family. The protein in the C-terminal section; belongs to the shikimate dehydrogenase family. Homodimer. Zn(2+) serves as cofactor.

The protein resides in the cytoplasm. The catalysed reaction is 7-phospho-2-dehydro-3-deoxy-D-arabino-heptonate = 3-dehydroquinate + phosphate. It catalyses the reaction 3-dehydroquinate = 3-dehydroshikimate + H2O. It carries out the reaction shikimate + NADP(+) = 3-dehydroshikimate + NADPH + H(+). The enzyme catalyses shikimate + ATP = 3-phosphoshikimate + ADP + H(+). The catalysed reaction is 3-phosphoshikimate + phosphoenolpyruvate = 5-O-(1-carboxyvinyl)-3-phosphoshikimate + phosphate. It functions in the pathway metabolic intermediate biosynthesis; chorismate biosynthesis; chorismate from D-erythrose 4-phosphate and phosphoenolpyruvate: step 2/7. Its pathway is metabolic intermediate biosynthesis; chorismate biosynthesis; chorismate from D-erythrose 4-phosphate and phosphoenolpyruvate: step 3/7. It participates in metabolic intermediate biosynthesis; chorismate biosynthesis; chorismate from D-erythrose 4-phosphate and phosphoenolpyruvate: step 4/7. The protein operates within metabolic intermediate biosynthesis; chorismate biosynthesis; chorismate from D-erythrose 4-phosphate and phosphoenolpyruvate: step 5/7. It functions in the pathway metabolic intermediate biosynthesis; chorismate biosynthesis; chorismate from D-erythrose 4-phosphate and phosphoenolpyruvate: step 6/7. Functionally, the AROM polypeptide catalyzes 5 consecutive enzymatic reactions in prechorismate polyaromatic amino acid biosynthesis. In Sclerotinia sclerotiorum (White mold), this protein is Pentafunctional AROM polypeptide.